The following is a 304-amino-acid chain: Ribonuclease Z (304 aa).

Positions 63, 65, 67, 68, 141, 208, and 266 each coordinate Zn(2+). Asp-67 functions as the Proton acceptor in the catalytic mechanism.

It belongs to the RNase Z family. In terms of assembly, homodimer. Zn(2+) serves as cofactor.

It catalyses the reaction Endonucleolytic cleavage of RNA, removing extra 3' nucleotides from tRNA precursor, generating 3' termini of tRNAs. A 3'-hydroxy group is left at the tRNA terminus and a 5'-phosphoryl group is left at the trailer molecule.. Functionally, zinc phosphodiesterase, which displays some tRNA 3'-processing endonuclease activity. Probably involved in tRNA maturation, by removing a 3'-trailer from precursor tRNA. This Chlamydia trachomatis serovar D (strain ATCC VR-885 / DSM 19411 / UW-3/Cx) protein is Ribonuclease Z.